Consider the following 101-residue polypeptide: Small ribosomal subunit protein uS14 (101 aa).

This sequence belongs to the universal ribosomal protein uS14 family. In terms of assembly, part of the 30S ribosomal subunit. Contacts proteins S3 and S10.

Functionally, binds 16S rRNA, required for the assembly of 30S particles and may also be responsible for determining the conformation of the 16S rRNA at the A site. This Salmonella schwarzengrund (strain CVM19633) protein is Small ribosomal subunit protein uS14.